Here is a 218-residue protein sequence, read N- to C-terminus: 3,4-dihydroxy-2-butanone 4-phosphate synthase (218 aa).

D-ribulose 5-phosphate-binding positions include 38–39 (RE), Asp-43, 151–155 (RRGHT), and Glu-175. Glu-39 contacts Mg(2+). His-154 serves as a coordination point for Mg(2+).

Belongs to the DHBP synthase family. Homodimer. Requires Mg(2+) as cofactor. Mn(2+) is required as a cofactor.

It catalyses the reaction D-ribulose 5-phosphate = (2S)-2-hydroxy-3-oxobutyl phosphate + formate + H(+). Its pathway is cofactor biosynthesis; riboflavin biosynthesis; 2-hydroxy-3-oxobutyl phosphate from D-ribulose 5-phosphate: step 1/1. Its function is as follows. Catalyzes the conversion of D-ribulose 5-phosphate to formate and 3,4-dihydroxy-2-butanone 4-phosphate. In Vibrio cholerae serotype O1 (strain ATCC 39541 / Classical Ogawa 395 / O395), this protein is 3,4-dihydroxy-2-butanone 4-phosphate synthase.